The primary structure comprises 312 residues: MPVKIPDDLPAAEILESENIFVMSETRAANQDIRPMKVLILNLMPNKIETETQLLRLLGNTPLQVDVDLLRIHDKASKHTSIDHMNNFYRDFEQVRQKNYDGLIITGAPLGQIEFEEVLYWDHIREIIDWSQQHVTSVLFLCWAAHAALYHLFGLNRSLLTTKRSGVFTHKRTSEHYPLLRGFDDEFFAPHSRFAEMDIDKLKAHPELQVLTESETAGAYMVLCKNNRNLFVMGHPEYQKSTLKDEYYRDLEQGLAPEVPQNYFTNNDPLQAPIARWHSHGSLLVSNWLNYYVYQLTPYNLDDMTGITPWGT.

The active-site Acyl-thioester intermediate is the C142. Substrate contacts are provided by K163 and S192. Catalysis depends on H235, which acts as the Proton acceptor. The active site involves E237. R249 contributes to the substrate binding site.

It belongs to the MetA family.

Its subcellular location is the cytoplasm. The enzyme catalyses L-homoserine + succinyl-CoA = O-succinyl-L-homoserine + CoA. It functions in the pathway amino-acid biosynthesis; L-methionine biosynthesis via de novo pathway; O-succinyl-L-homoserine from L-homoserine: step 1/1. Transfers a succinyl group from succinyl-CoA to L-homoserine, forming succinyl-L-homoserine. The protein is Homoserine O-succinyltransferase of Shewanella halifaxensis (strain HAW-EB4).